The chain runs to 20 residues: Cytochrome c oxidase subunit 6A1, mitochondrial (20 aa).

It belongs to the cytochrome c oxidase subunit 6A family. In terms of assembly, component of the cytochrome c oxidase (complex IV, CIV), a multisubunit enzyme composed of 14 subunits. The complex is composed of a catalytic core of 3 subunits MT-CO1, MT-CO2 and MT-CO3, encoded in the mitochondrial DNA, and 11 supernumerary subunits COX4I, COX5A, COX5B, COX6A, COX6B, COX6C, COX7A, COX7B, COX7C, COX8 and NDUFA4, which are encoded in the nuclear genome. The complex exists as a monomer or a dimer and forms supercomplexes (SCs) in the inner mitochondrial membrane with NADH-ubiquinone oxidoreductase (complex I, CI) and ubiquinol-cytochrome c oxidoreductase (cytochrome b-c1 complex, complex III, CIII), resulting in different assemblies (supercomplex SCI(1)III(2)IV(1) and megacomplex MCI(2)III(2)IV(2)). Liver specific isoform.

Its subcellular location is the mitochondrion inner membrane. Its pathway is energy metabolism; oxidative phosphorylation. Component of the cytochrome c oxidase, the last enzyme in the mitochondrial electron transport chain which drives oxidative phosphorylation. The respiratory chain contains 3 multisubunit complexes succinate dehydrogenase (complex II, CII), ubiquinol-cytochrome c oxidoreductase (cytochrome b-c1 complex, complex III, CIII) and cytochrome c oxidase (complex IV, CIV), that cooperate to transfer electrons derived from NADH and succinate to molecular oxygen, creating an electrochemical gradient over the inner membrane that drives transmembrane transport and the ATP synthase. Cytochrome c oxidase is the component of the respiratory chain that catalyzes the reduction of oxygen to water. Electrons originating from reduced cytochrome c in the intermembrane space (IMS) are transferred via the dinuclear copper A center (CU(A)) of subunit 2 and heme A of subunit 1 to the active site in subunit 1, a binuclear center (BNC) formed by heme A3 and copper B (CU(B)). The BNC reduces molecular oxygen to 2 water molecules unsing 4 electrons from cytochrome c in the IMS and 4 protons from the mitochondrial matrix. In Ovis aries (Sheep), this protein is Cytochrome c oxidase subunit 6A1, mitochondrial (COX6A1).